The primary structure comprises 124 residues: Large ribosomal subunit protein uL22 (124 aa).

This sequence belongs to the universal ribosomal protein uL22 family. Part of the 50S ribosomal subunit.

Functionally, this protein binds specifically to 23S rRNA; its binding is stimulated by other ribosomal proteins, e.g. L4, L17, and L20. It is important during the early stages of 50S assembly. It makes multiple contacts with different domains of the 23S rRNA in the assembled 50S subunit and ribosome. In terms of biological role, the globular domain of the protein is located near the polypeptide exit tunnel on the outside of the subunit, while an extended beta-hairpin is found that lines the wall of the exit tunnel in the center of the 70S ribosome. The protein is Large ribosomal subunit protein uL22 of Treponema pallidum (strain Nichols).